A 191-amino-acid chain; its full sequence is Large ribosomal subunit protein uL5 (191 aa).

Belongs to the universal ribosomal protein uL5 family. As to quaternary structure, part of the 50S ribosomal subunit; part of the 5S rRNA/L5/L18/L25 subcomplex. Contacts the 5S rRNA and the P site tRNA. Forms a bridge to the 30S subunit in the 70S ribosome.

This is one of the proteins that bind and probably mediate the attachment of the 5S RNA into the large ribosomal subunit, where it forms part of the central protuberance. In the 70S ribosome it contacts protein S13 of the 30S subunit (bridge B1b), connecting the 2 subunits; this bridge is implicated in subunit movement. Contacts the P site tRNA; the 5S rRNA and some of its associated proteins might help stabilize positioning of ribosome-bound tRNAs. The sequence is that of Large ribosomal subunit protein uL5 from Micrococcus luteus (strain ATCC 4698 / DSM 20030 / JCM 1464 / CCM 169 / CCUG 5858 / IAM 1056 / NBRC 3333 / NCIMB 9278 / NCTC 2665 / VKM Ac-2230) (Micrococcus lysodeikticus).